The primary structure comprises 450 residues: ATP-dependent protease ATPase subunit HslU (450 aa).

ATP-binding positions include Ile18 and 60–65; that span reads GVGKTE. Residues 140-151 show a composition bias toward polar residues; the sequence is KTSSSGWAQQQE. The segment at 140-162 is disordered; that stretch reads KTSSSGWAQQQEETPENDDQRGT. Asp263, Glu328, and Arg400 together coordinate ATP.

The protein belongs to the ClpX chaperone family. HslU subfamily. As to quaternary structure, a double ring-shaped homohexamer of HslV is capped on each side by a ring-shaped HslU homohexamer. The assembly of the HslU/HslV complex is dependent on binding of ATP.

The protein resides in the cytoplasm. ATPase subunit of a proteasome-like degradation complex; this subunit has chaperone activity. The binding of ATP and its subsequent hydrolysis by HslU are essential for unfolding of protein substrates subsequently hydrolyzed by HslV. HslU recognizes the N-terminal part of its protein substrates and unfolds these before they are guided to HslV for hydrolysis. This chain is ATP-dependent protease ATPase subunit HslU, found in Idiomarina loihiensis (strain ATCC BAA-735 / DSM 15497 / L2-TR).